A 29-amino-acid polypeptide reads, in one-letter code: Cytochrome b6-f complex subunit 8 (29 aa).

Residues 3-23 (IISIGWVSLMVVFTFSISLVV) form a helical membrane-spanning segment.

It belongs to the PetN family. In terms of assembly, the 4 large subunits of the cytochrome b6-f complex are cytochrome b6, subunit IV (17 kDa polypeptide, PetD), cytochrome f and the Rieske protein, while the 4 small subunits are PetG, PetL, PetM and PetN. The complex functions as a dimer.

It localises to the plastid. Its subcellular location is the chloroplast thylakoid membrane. Component of the cytochrome b6-f complex, which mediates electron transfer between photosystem II (PSII) and photosystem I (PSI), cyclic electron flow around PSI, and state transitions. In Staurastrum punctulatum (Green alga), this protein is Cytochrome b6-f complex subunit 8.